Here is a 227-residue protein sequence, read N- to C-terminus: Ashwin (227 aa).

Basic and acidic residues predominate over residues 71-84 (LPRSRWGKRMEKSR). A disordered region spans residues 71–227 (LPRSRWGKRM…KKKIQHITWP (157 aa)). The span at 88 to 98 (SSSSTHSSSTD) shows a compositional bias: low complexity. A compositionally biased stretch (polar residues) spans 153–173 (GASTNCSSSNFSNRTPVSSSG). Over residues 178-191 (SPSNHSNSSVHSNN) the composition is skewed to low complexity. Residues 204 to 219 (GEPDTAKDIKSPETKK) are compositionally biased toward basic and acidic residues.

Belongs to the ashwin family.

The protein resides in the nucleus. The protein is Ashwin of Danio rerio (Zebrafish).